Here is a 486-residue protein sequence, read N- to C-terminus: 2-hydroxymuconic semialdehyde dehydrogenase (486 aa).

Residues glutamate 254 and cysteine 288 contribute to the active site.

This sequence belongs to the aldehyde dehydrogenase family.

It carries out the reaction (2Z,4E)-2-hydroxy-6-oxohexa-2,4-dienoate + NAD(+) + H2O = (2Z,4E)-2-hydroxyhexa-2,4-dienedioate + NADH + 2 H(+). It participates in aromatic compound metabolism; benzoate degradation via hydroxylation. In terms of biological role, 2-hydroxymuconic acid semialdehyde can be converted to 2-hydroxypent-2,4-dienoate either directly by the action of 2-hydroxymuconic semialdehyde hydrolase (HMSH) or by the action of three sequential enzymes, the first of which is HMSD. The protein is 2-hydroxymuconic semialdehyde dehydrogenase (dmpC) of Pseudomonas sp. (strain CF600).